A 317-amino-acid chain; its full sequence is GTP cyclohydrolase MptA (317 aa).

This sequence belongs to the GTP cyclohydrolase IV family. In terms of assembly, homodimer. The cofactor is Fe(2+).

The enzyme catalyses GTP + H2O = 7,8-dihydroneopterin 2',3'-cyclic phosphate + formate + diphosphate + H(+). The protein operates within cofactor biosynthesis; 5,6,7,8-tetrahydromethanopterin biosynthesis. Its function is as follows. Converts GTP to 7,8-dihydro-D-neopterin 2',3'-cyclic phosphate, the first intermediate in the biosynthesis of coenzyme methanopterin. This chain is GTP cyclohydrolase MptA, found in Methanococcoides burtonii (strain DSM 6242 / NBRC 107633 / OCM 468 / ACE-M).